A 129-amino-acid chain; its full sequence is Small ribosomal subunit protein uS11 (129 aa).

This sequence belongs to the universal ribosomal protein uS11 family. Part of the 30S ribosomal subunit. Interacts with proteins S7 and S18. Binds to IF-3.

Located on the platform of the 30S subunit, it bridges several disparate RNA helices of the 16S rRNA. Forms part of the Shine-Dalgarno cleft in the 70S ribosome. The sequence is that of Small ribosomal subunit protein uS11 from Caulobacter vibrioides (strain ATCC 19089 / CIP 103742 / CB 15) (Caulobacter crescentus).